We begin with the raw amino-acid sequence, 295 residues long: Glycine--tRNA ligase alpha subunit (295 aa).

This sequence belongs to the class-II aminoacyl-tRNA synthetase family. In terms of assembly, tetramer of two alpha and two beta subunits.

Its subcellular location is the cytoplasm. The catalysed reaction is tRNA(Gly) + glycine + ATP = glycyl-tRNA(Gly) + AMP + diphosphate. This Shouchella clausii (strain KSM-K16) (Alkalihalobacillus clausii) protein is Glycine--tRNA ligase alpha subunit.